Reading from the N-terminus, the 950-residue chain is Glycine dehydrogenase (decarboxylating) (950 aa).

Lysine 698 carries the post-translational modification N6-(pyridoxal phosphate)lysine.

The protein belongs to the GcvP family. The glycine cleavage system is composed of four proteins: P, T, L and H. Pyridoxal 5'-phosphate serves as cofactor.

It carries out the reaction N(6)-[(R)-lipoyl]-L-lysyl-[glycine-cleavage complex H protein] + glycine + H(+) = N(6)-[(R)-S(8)-aminomethyldihydrolipoyl]-L-lysyl-[glycine-cleavage complex H protein] + CO2. Functionally, the glycine cleavage system catalyzes the degradation of glycine. The P protein binds the alpha-amino group of glycine through its pyridoxal phosphate cofactor; CO(2) is released and the remaining methylamine moiety is then transferred to the lipoamide cofactor of the H protein. In Neisseria gonorrhoeae (strain NCCP11945), this protein is Glycine dehydrogenase (decarboxylating).